A 317-amino-acid chain; its full sequence is Acetyl-coenzyme A carboxylase carboxyl transferase subunit alpha (317 aa).

The CoA carboxyltransferase C-terminal domain maps to 39–293 (KLEGKAQEAL…GNAIAEAMGS (255 aa)).

It belongs to the AccA family. As to quaternary structure, acetyl-CoA carboxylase is a heterohexamer composed of biotin carboxyl carrier protein (AccB), biotin carboxylase (AccC) and two subunits each of ACCase subunit alpha (AccA) and ACCase subunit beta (AccD).

It localises to the cytoplasm. The catalysed reaction is N(6)-carboxybiotinyl-L-lysyl-[protein] + acetyl-CoA = N(6)-biotinyl-L-lysyl-[protein] + malonyl-CoA. Its pathway is lipid metabolism; malonyl-CoA biosynthesis; malonyl-CoA from acetyl-CoA: step 1/1. Component of the acetyl coenzyme A carboxylase (ACC) complex. First, biotin carboxylase catalyzes the carboxylation of biotin on its carrier protein (BCCP) and then the CO(2) group is transferred by the carboxyltransferase to acetyl-CoA to form malonyl-CoA. The chain is Acetyl-coenzyme A carboxylase carboxyl transferase subunit alpha from Azorhizobium caulinodans (strain ATCC 43989 / DSM 5975 / JCM 20966 / LMG 6465 / NBRC 14845 / NCIMB 13405 / ORS 571).